The sequence spans 373 residues: Dual-specificity RNA methyltransferase RlmN (373 aa).

The active-site Proton acceptor is the glutamate 94. In terms of domain architecture, Radical SAM core spans 100 to 339; it reads EDDRATLCVS…VIVRKTRGDD (240 aa). An intrachain disulfide couples cysteine 107 to cysteine 344. Cysteine 114, cysteine 118, and cysteine 121 together coordinate [4Fe-4S] cluster. Residues 168-169, serine 200, 222-224, and asparagine 301 each bind S-adenosyl-L-methionine; these read GE and SIH. The S-methylcysteine intermediate role is filled by cysteine 344.

It belongs to the radical SAM superfamily. RlmN family. Requires [4Fe-4S] cluster as cofactor.

The protein localises to the cytoplasm. The catalysed reaction is adenosine(2503) in 23S rRNA + 2 reduced [2Fe-2S]-[ferredoxin] + 2 S-adenosyl-L-methionine = 2-methyladenosine(2503) in 23S rRNA + 5'-deoxyadenosine + L-methionine + 2 oxidized [2Fe-2S]-[ferredoxin] + S-adenosyl-L-homocysteine. It catalyses the reaction adenosine(37) in tRNA + 2 reduced [2Fe-2S]-[ferredoxin] + 2 S-adenosyl-L-methionine = 2-methyladenosine(37) in tRNA + 5'-deoxyadenosine + L-methionine + 2 oxidized [2Fe-2S]-[ferredoxin] + S-adenosyl-L-homocysteine. In terms of biological role, specifically methylates position 2 of adenine 2503 in 23S rRNA and position 2 of adenine 37 in tRNAs. m2A2503 modification seems to play a crucial role in the proofreading step occurring at the peptidyl transferase center and thus would serve to optimize ribosomal fidelity. The sequence is that of Dual-specificity RNA methyltransferase RlmN from Shewanella sp. (strain MR-7).